The primary structure comprises 83 residues: Mu-theraphotoxin-Hhn2b 3 (83 aa).

The signal sequence occupies residues 1–21; the sequence is MKASMFLALAGLVLLFVVCYA. Positions 22-48 are excised as a propeptide; sequence SESEEKEFPRELISKIFAVDDFKGEVR. 3 disulfides stabilise this stretch: C50-C65, C57-C70, and C64-C77. L81 bears the Leucine amide mark.

Belongs to the neurotoxin 10 (Hwtx-1) family. 14 (Hntx-1) subfamily. In terms of assembly, monomer. In terms of tissue distribution, expressed by the venom gland.

The protein resides in the secreted. Functionally, weakly blocks the rat SCN2A/SCN1B (Nav1.2/beta-1) sodium channel (IC(50)=68 uM) and the insect sodium channel para/tipE (IC(50)=4.3 uM), without altering the activation or inactivation kinetics (depressant toxin). This Cyriopagopus hainanus (Chinese bird spider) protein is Mu-theraphotoxin-Hhn2b 3.